A 448-amino-acid polypeptide reads, in one-letter code: Adenosylhomocysteinase (448 aa).

3 residues coordinate substrate: Thr-61, Asp-136, and Glu-161. 162–164 (TTA) lines the NAD(+) pocket. The substrate site is built by Lys-191 and Asp-195. NAD(+)-binding positions include Asn-196, 225 to 230 (GYGDVG), Glu-248, Asn-283, 304 to 306 (IGH), and Asn-360.

The protein belongs to the adenosylhomocysteinase family. Requires NAD(+) as cofactor.

It is found in the cytoplasm. It catalyses the reaction S-adenosyl-L-homocysteine + H2O = L-homocysteine + adenosine. It participates in amino-acid biosynthesis; L-homocysteine biosynthesis; L-homocysteine from S-adenosyl-L-homocysteine: step 1/1. May play a key role in the regulation of the intracellular concentration of adenosylhomocysteine. The protein is Adenosylhomocysteinase of Rhodopirellula baltica (strain DSM 10527 / NCIMB 13988 / SH1).